The sequence spans 333 residues: MIDTTLPLTDIHRHLDGNIRPQTILELGRQYNISLPAQSLETLIPHVQVIANEPDLVSFLTKLDWGVKVLASLDACRRVAFENIEDAARNGLHYVELRFSPGYMAMAHQLPVAGVVEAVIDGVREGCRTFGVQAKLIGIMSRTFGEAACQQELEAFLAHRDQITALDLAGDELGFPGSLFLSHFNRARDAGWHITVHAGEAAGPESIWQAIRELGAERIGHGVKAIEDRALMDFLAEQQIGIESCLTSNIQTSTVAELAAHPLKTFLEHGIRASINTDDPGVQGVDIIHEYTVAAPAAGLSREQIRQAQINGLEMAFLSAEEKRALREKVAAK.

Histidine 12 and histidine 14 together coordinate Zn(2+). Positions 14, 16, and 170 each coordinate substrate. Histidine 197 is a Zn(2+) binding site. The active-site Proton donor is glutamate 200. Position 278 (aspartate 278) interacts with Zn(2+). Aspartate 279 serves as a coordination point for substrate.

It belongs to the metallo-dependent hydrolases superfamily. Adenosine and AMP deaminases family. Adenosine deaminase subfamily. It depends on Zn(2+) as a cofactor.

The catalysed reaction is adenosine + H2O + H(+) = inosine + NH4(+). It carries out the reaction 2'-deoxyadenosine + H2O + H(+) = 2'-deoxyinosine + NH4(+). Catalyzes the hydrolytic deamination of adenosine and 2-deoxyadenosine. This Shigella sonnei (strain Ss046) protein is Adenosine deaminase.